A 429-amino-acid chain; its full sequence is MRFHLGLTEALQEREPNINASSKDLSLLHFELYRRSEPIMDIDEESYLNAGPSAPSKIPQGGEGDGLQGMSKKAMKRAAKQARLEEIKPLKRAAERERRRQRTAQLAEGYAAGTLSEADKELVERRRRVEKERKEAQRRIESGDQANDWLGGVVIDLGFDDLMTDQEIASMAQQLGYLYSSNRTAEKPVRTVIHTTFSPAASPRLWQRMENFNWHKWSRCHWWEQGLETLKSQLDPSTSILSVQSVVSKETQDKAGIDTKSLLSRLTGPQVPVDLQAGKHKLVYLSADAEDELLSLSEDEIYIIGGIVDRNRHKNLCQGKAEQLGIRTARLPIGTFLEMLPTRKALTVNQVFDILVKYLHLGDWAAAFEAVIPIRKYAPGRKAKRAKTETKRNEKVEEEVECTSAEGEEDIGVIEESAEVDPEDVFSNQ.

One can recognise an SAM-dependent MTase TRM10-type domain in the interval K131–P379. S-adenosyl-L-methionine is bound by residues L285–S286, G305, D309–H313, C317, L331, and K344–L346. The active-site Proton acceptor is D309. Residues A383–Q429 are disordered. Positions A386 to K395 are enriched in basic and acidic residues. Positions V396–Q429 are enriched in acidic residues.

This sequence belongs to the class IV-like SAM-binding methyltransferase superfamily. TRM10 family. Monomer.

The protein localises to the cytoplasm. Its subcellular location is the nucleus. The catalysed reaction is guanosine(9) in tRNA + S-adenosyl-L-methionine = N(1)-methylguanosine(9) in tRNA + S-adenosyl-L-homocysteine + H(+). Its function is as follows. S-adenosyl-L-methionine-dependent guanine N(1)-methyltransferase that catalyzes the formation of N(1)-methylguanine at position 9 (m1G9) in cytoplasmic tRNA. This chain is tRNA (guanine(9)-N1)-methyltransferase, found in Cryptococcus neoformans var. neoformans serotype D (strain B-3501A) (Filobasidiella neoformans).